An 87-amino-acid chain; its full sequence is Small ribosomal subunit protein bS20 (87 aa).

Over residues 1-10 (MANIKSKQKR) the composition is skewed to basic residues. Residues 1 to 27 (MANIKSKQKRILTNEKSRQRNKSVRSA) are disordered.

It belongs to the bacterial ribosomal protein bS20 family.

Binds directly to 16S ribosomal RNA. This is Small ribosomal subunit protein bS20 from Corynebacterium aurimucosum (strain ATCC 700975 / DSM 44827 / CIP 107346 / CN-1) (Corynebacterium nigricans).